We begin with the raw amino-acid sequence, 253 residues long: Protein phosphatase CheZ (253 aa).

The interval 1 to 84 (MTQEELDALM…EWPPPPPTEE (84 aa)) is disordered. The span at 21–69 (LETKEETKEEAKEEAKEEAKEEAKEKEEIKEESSSQKMTVKKEDAEKYG) shows a compositional bias: basic and acidic residues.

This sequence belongs to the CheZ family. Interacts with ChePep; this interaction is essential for each other polar localization.

It localises to the cytoplasm. Its function is as follows. Plays an important role in bacterial chemotaxis signal transduction pathway by accelerating the dephosphorylation of phosphorylated CheY (CheY-P). Also dephosphorylates CheV2 but not CheV1 or CheV3. In addition, forms a distinct chemotaxis regulatory complex with ChePep independently of the core chemotaxis signaling proteins. This chain is Protein phosphatase CheZ, found in Helicobacter pylori (strain ATCC 700392 / 26695) (Campylobacter pylori).